A 258-amino-acid polypeptide reads, in one-letter code: Flagellar brake protein YcgR (258 aa).

Residues 131–248 enclose the PilZ domain; it reads QKREYYRVAT…ALSLIQRYIT (118 aa).

Belongs to the YcgR family. Monomer. Interacts with the flagellar basal bodies.

It localises to the bacterial flagellum basal body. Acts as a flagellar brake, regulating swimming and swarming in a bis-(3'-5') cyclic diguanylic acid (c-di-GMP)-dependent manner. Binds 1 c-di-GMP dimer per subunit. Increasing levels of c-di-GMP lead to decreased motility. The polypeptide is Flagellar brake protein YcgR (Nitrosospira multiformis (strain ATCC 25196 / NCIMB 11849 / C 71)).